An 887-amino-acid polypeptide reads, in one-letter code: Inter-alpha-trypsin inhibitor heavy chain H3 (887 aa).

The signal sequence occupies residues 1 to 21; it reads MVTLWWPCLVLALLSGLETSG. The propeptide occupies 22-33; that stretch reads FPRSPLRLLGKR. The VIT domain maps to 29–158; the sequence is LLGKRSLPEG…KVIFELTYEE (130 aa). Asn91 carries N-linked (GlcNAc...) asparagine glycosylation. One can recognise a VWFA domain in the interval 282–442; that stretch reads PKNIAFVIDV…YNFLESLALE (161 aa). Asn580 is a glycosylation site (N-linked (GlcNAc...) asparagine). Aspartate 1-(chondroitin 4-sulfate)-ester is present on Asp647. Positions 648 to 887 are excised as a propeptide; the sequence is PHFIIQVPGK…HTDYIVPSLF (240 aa).

The protein belongs to the ITIH family. I-alpha-I plasma protease inhibitors are assembled from one or two heavy chains (HC) and one light chain, bikunin. Pre-alpha-inhibitor (P-alpha-I) is composed of ITIH3/HC3 and bikunin. In terms of processing, heavy chains are linked to bikunin via chondroitin 4-sulfate esterified to the alpha-carboxyl of the C-terminal aspartate after propeptide cleavage.

The protein resides in the secreted. Its function is as follows. May act as a carrier of hyaluronan in serum or as a binding protein between hyaluronan and other matrix protein, including those on cell surfaces in tissues to regulate the localization, synthesis and degradation of hyaluronan which are essential to cells undergoing biological processes. This is Inter-alpha-trypsin inhibitor heavy chain H3 (Itih3) from Rattus norvegicus (Rat).